The chain runs to 362 residues: Ferredoxin--NADP reductase 1 (362 aa).

Positions 47, 55, 60, 100, 141, 309, and 350 each coordinate FAD.

It belongs to the ferredoxin--NADP reductase type 2 family. In terms of assembly, homodimer. It depends on FAD as a cofactor.

The enzyme catalyses 2 reduced [2Fe-2S]-[ferredoxin] + NADP(+) + H(+) = 2 oxidized [2Fe-2S]-[ferredoxin] + NADPH. In Cupriavidus pinatubonensis (strain JMP 134 / LMG 1197) (Cupriavidus necator (strain JMP 134)), this protein is Ferredoxin--NADP reductase 1.